A 129-amino-acid polypeptide reads, in one-letter code: Glycine cleavage system H protein (129 aa).

The region spanning 24 to 106 (LVRVGLSAYA…HGEGWLLVIR (83 aa)) is the Lipoyl-binding domain. Lysine 65 carries the N6-lipoyllysine modification.

It belongs to the GcvH family. In terms of assembly, the glycine cleavage system is composed of four proteins: P, T, L and H. (R)-lipoate serves as cofactor.

Its function is as follows. The glycine cleavage system catalyzes the degradation of glycine. The H protein shuttles the methylamine group of glycine from the P protein to the T protein. The chain is Glycine cleavage system H protein from Synechococcus sp. (strain CC9311).